The chain runs to 1193 residues: DNA-directed RNA polymerase subunit beta (1193 aa).

The segment covering 1153 to 1162 (EMRDLEDDED) has biased composition (acidic residues). Residues 1153 to 1193 (EMRDLEDDEDAKQNEGLSLPNDEESEELVSADAERDVVTKE) form a disordered region. Basic and acidic residues predominate over residues 1184–1193 (DAERDVVTKE).

The protein belongs to the RNA polymerase beta chain family. As to quaternary structure, the RNAP catalytic core consists of 2 alpha, 1 beta, 1 beta' and 1 omega subunit. When a sigma factor is associated with the core the holoenzyme is formed, which can initiate transcription.

It carries out the reaction RNA(n) + a ribonucleoside 5'-triphosphate = RNA(n+1) + diphosphate. In terms of biological role, DNA-dependent RNA polymerase catalyzes the transcription of DNA into RNA using the four ribonucleoside triphosphates as substrates. The polypeptide is DNA-directed RNA polymerase subunit beta (Bacillus licheniformis (strain ATCC 14580 / DSM 13 / JCM 2505 / CCUG 7422 / NBRC 12200 / NCIMB 9375 / NCTC 10341 / NRRL NRS-1264 / Gibson 46)).